A 359-amino-acid polypeptide reads, in one-letter code: Isopentenyl-diphosphate delta-isomerase (359 aa).

12-13 (RK) is a binding site for substrate. FMN is bound by residues S68, 69–71 (AMT), S99, and N128. 99 to 101 (SQR) provides a ligand contact to substrate. Substrate is bound at residue Q162. Residue E163 coordinates Mg(2+). FMN is bound by residues K194, T224, 277–279 (GIR), and 298–299 (AL).

This sequence belongs to the IPP isomerase type 2 family. As to quaternary structure, homooctamer. Dimer of tetramers. The cofactor is FMN. NADPH serves as cofactor. Mg(2+) is required as a cofactor.

The protein resides in the cytoplasm. The catalysed reaction is isopentenyl diphosphate = dimethylallyl diphosphate. Functionally, involved in the biosynthesis of isoprenoids. Catalyzes the 1,3-allylic rearrangement of the homoallylic substrate isopentenyl (IPP) to its allylic isomer, dimethylallyl diphosphate (DMAPP). This is Isopentenyl-diphosphate delta-isomerase from Methanoregula boonei (strain DSM 21154 / JCM 14090 / 6A8).